A 155-amino-acid polypeptide reads, in one-letter code: Endoribonuclease YbeY (155 aa).

Zn(2+)-binding residues include His-116, His-120, and His-126.

The protein belongs to the endoribonuclease YbeY family. Requires Zn(2+) as cofactor.

It is found in the cytoplasm. Functionally, single strand-specific metallo-endoribonuclease involved in late-stage 70S ribosome quality control and in maturation of the 3' terminus of the 16S rRNA. The protein is Endoribonuclease YbeY of Colwellia psychrerythraea (strain 34H / ATCC BAA-681) (Vibrio psychroerythus).